The primary structure comprises 542 residues: Phosphoacetylglucosamine mutase (542 aa).

M1 bears the N-acetylmethionine mark. Residue T62 is modified to Phosphothreonine. S64 (phosphoserine intermediate) is an active-site residue. 4 residues coordinate Mg(2+): S64, D276, D278, and D280. Phosphoserine is present on S64. Residues 370–372 (EAN), 496–500 (RPSGT), and R505 contribute to the substrate site.

This sequence belongs to the phosphohexose mutase family. Mg(2+) serves as cofactor.

The enzyme catalyses N-acetyl-alpha-D-glucosamine 1-phosphate = N-acetyl-D-glucosamine 6-phosphate. The protein operates within nucleotide-sugar biosynthesis; UDP-N-acetyl-alpha-D-glucosamine biosynthesis; N-acetyl-alpha-D-glucosamine 1-phosphate from alpha-D-glucosamine 6-phosphate (route I): step 2/2. With respect to regulation, inhibited by Mn(2+), Cd(2+), Zn(2+), Cu(2+) and Be(2+). Its function is as follows. Catalyzes the conversion of GlcNAc-6-P into GlcNAc-1-P during the synthesis of uridine diphosphate/UDP-GlcNAc, a sugar nucleotide critical to multiple glycosylation pathways including protein N- and O-glycosylation. The polypeptide is Phosphoacetylglucosamine mutase (Sus scrofa (Pig)).